A 344-amino-acid polypeptide reads, in one-letter code: Lipase chaperone (344 aa).

A helical membrane pass occupies residues 14 to 34 (AVVYGAVGLAAIAGVAMWSGA). The segment at 37–78 (HGGTGASGEPPDASAARGPAAAPPQAAVPASTSLPPSLAGSS) is disordered. Residues 43–78 (SGEPPDASAARGPAAAPPQAAVPASTSLPPSLAGSS) are compositionally biased toward low complexity.

Belongs to the lipase chaperone family.

The protein localises to the cell inner membrane. Its function is as follows. May be involved in the folding of the extracellular lipase during its passage through the periplasm. The chain is Lipase chaperone (lifO) from Burkholderia cepacia (Pseudomonas cepacia).